Reading from the N-terminus, the 427-residue chain is Enolase 2 (427 aa).

Gln163 serves as a coordination point for (2R)-2-phosphoglycerate. The Proton donor role is filled by Glu205. Asp242, Glu285, and Asp312 together coordinate Mg(2+). (2R)-2-phosphoglycerate-binding residues include Lys337, Arg366, Ser367, and Lys388. The active-site Proton acceptor is Lys337.

This sequence belongs to the enolase family. In terms of assembly, component of the RNA degradosome, a multiprotein complex involved in RNA processing and mRNA degradation. Mg(2+) is required as a cofactor.

The protein localises to the cytoplasm. It is found in the secreted. It localises to the cell surface. The catalysed reaction is (2R)-2-phosphoglycerate = phosphoenolpyruvate + H2O. It functions in the pathway carbohydrate degradation; glycolysis; pyruvate from D-glyceraldehyde 3-phosphate: step 4/5. In terms of biological role, catalyzes the reversible conversion of 2-phosphoglycerate (2-PG) into phosphoenolpyruvate (PEP). It is essential for the degradation of carbohydrates via glycolysis. This Methylococcus capsulatus (strain ATCC 33009 / NCIMB 11132 / Bath) protein is Enolase 2.